The chain runs to 89 residues: Small ribosomal subunit protein uS15 (89 aa).

It belongs to the universal ribosomal protein uS15 family. In terms of assembly, part of the 30S ribosomal subunit. Forms a bridge to the 50S subunit in the 70S ribosome, contacting the 23S rRNA.

One of the primary rRNA binding proteins, it binds directly to 16S rRNA where it helps nucleate assembly of the platform of the 30S subunit by binding and bridging several RNA helices of the 16S rRNA. In terms of biological role, forms an intersubunit bridge (bridge B4) with the 23S rRNA of the 50S subunit in the ribosome. In Streptococcus thermophilus (strain CNRZ 1066), this protein is Small ribosomal subunit protein uS15.